The chain runs to 182 residues: ATP-dependent protease subunit HslV (182 aa).

T10 is a catalytic residue. A166, C169, and S172 together coordinate Na(+).

This sequence belongs to the peptidase T1B family. HslV subfamily. As to quaternary structure, a double ring-shaped homohexamer of HslV is capped on each side by a ring-shaped HslU homohexamer. The assembly of the HslU/HslV complex is dependent on binding of ATP.

It localises to the cytoplasm. It carries out the reaction ATP-dependent cleavage of peptide bonds with broad specificity.. Its activity is regulated as follows. Allosterically activated by HslU binding. Protease subunit of a proteasome-like degradation complex believed to be a general protein degrading machinery. In Rickettsia africae (strain ESF-5), this protein is ATP-dependent protease subunit HslV.